Here is a 158-residue protein sequence, read N- to C-terminus: Protein Smg homolog (158 aa).

Belongs to the Smg family.

The protein is Protein Smg homolog of Shewanella oneidensis (strain ATCC 700550 / JCM 31522 / CIP 106686 / LMG 19005 / NCIMB 14063 / MR-1).